A 208-amino-acid polypeptide reads, in one-letter code: Calcyphosin-like protein (208 aa).

EF-hand domains lie at 39–74, 75–110, 111–146, and 154–191; these read AGIK…YAVV, MEKE…PMSR, ARKE…KHHP, and TEEQ…VSAS. Ca(2+) is bound by residues D52, N54, N56, T58, E63, D88, D90, S92, T94, and E99.

It localises to the cytoplasm. The chain is Calcyphosin-like protein (Capsl) from Mus musculus (Mouse).